Reading from the N-terminus, the 677-residue chain is DNA ligase (677 aa).

Residues 35 to 39, 84 to 85, and E115 contribute to the NAD(+) site; these read DAVYD and SL. K117 functions as the N6-AMP-lysine intermediate in the catalytic mechanism. NAD(+) contacts are provided by R138, E177, K296, and K320. Zn(2+) contacts are provided by C414, C417, C432, and C437. Residues 599–677 enclose the BRCT domain; that stretch reads NGILKLNGKT…ETQLLEILEE (79 aa).

This sequence belongs to the NAD-dependent DNA ligase family. LigA subfamily. Mg(2+) serves as cofactor. It depends on Mn(2+) as a cofactor.

The enzyme catalyses NAD(+) + (deoxyribonucleotide)n-3'-hydroxyl + 5'-phospho-(deoxyribonucleotide)m = (deoxyribonucleotide)n+m + AMP + beta-nicotinamide D-nucleotide.. In terms of biological role, DNA ligase that catalyzes the formation of phosphodiester linkages between 5'-phosphoryl and 3'-hydroxyl groups in double-stranded DNA using NAD as a coenzyme and as the energy source for the reaction. It is essential for DNA replication and repair of damaged DNA. The protein is DNA ligase of Nostoc sp. (strain PCC 7120 / SAG 25.82 / UTEX 2576).